We begin with the raw amino-acid sequence, 433 residues long: Evolutionarily conserved signaling intermediate in Toll pathway, mitochondrial (433 aa).

The N-terminal 48 residues, 1 to 48, are a transit peptide targeting the mitochondrion; sequence MSWAQAILLARGASRGWGGICSTALTGAPFSQVPPQAPRGLRCSAAAH. Residues 36 to 63 form a disordered region; the sequence is QAPRGLRCSAAAHNPDSSLVPHPPEPPR. Residue Lys-372 forms a Glycyl lysine isopeptide (Lys-Gly) (interchain with G-Cter in ubiquitin) linkage. The interval 397–433 is disordered; it reads SGELLPSSSELEEPPPPPPEGQEEEEDSQQRQQQGQS.

This sequence belongs to the ECSIT family. Interacts with MAP3K1, SMAD4 and TRAF6. Interacts with SMAD1 only after BMP4-treatment. Part of the mitochondrial complex I assembly/MCIA complex that comprises at least the core subunits TMEM126B, NDUFAF1, ECSIT and ACAD9 and complement subunits such as COA1 and TMEM186. Interacts with NDUFAF1. Interacts with ACAD9. Interacts with TRIM59. Interacts with TMEM70 and TMEM242. Interacts (when ubiquitinated) with NF-kappa-B subunits RELA and NFKB1. Interacts with RIGI, IFIT1 and MAVS; these interactions promote RLR-mediated type I IFN induction. Interacts with SQSTM1; this interaction inhibits TLR4 signaling via functional regulation of the TRAF6-ECSIT complex. Interacts with cereblon/CRBN; this interaction inhibits the ubiquitination of ECSIT. Ubiquitinated on Lys-372; leading to translocation in the nucleus together with RELA and NFKB1 and expression of NF-kappa-B-dependent genes.

It is found in the cytoplasm. Its subcellular location is the nucleus. The protein resides in the mitochondrion. In terms of biological role, adapter protein that plays a role in different signaling pathways including TLRs and IL-1 pathways or innate antiviral induction signaling. Plays a role in the activation of NF-kappa-B by forming a signal complex with TRAF6 and TAK1/MAP3K7 to activate TAK1/MAP3K7 leading to activation of IKKs. Once ubiquitinated, interacts with the dissociated RELA and NFKB1 proteins and translocates to the nucleus where it induces NF-kappa-B-dependent gene expression. Plays a role in innate antiviral immune response by bridging the pattern recognition receptors RIGI and MDA5/IFIT1 to the MAVS complex at the mitochondrion. Promotes proteolytic activation of MAP3K1. Involved in the BMP signaling pathway. Required for normal embryonic development. Functionally, as part of the MCIA complex, involved in the assembly of the mitochondrial complex I. This is Evolutionarily conserved signaling intermediate in Toll pathway, mitochondrial from Bos taurus (Bovine).